A 137-amino-acid chain; its full sequence is Nucleoside diphosphate kinase (137 aa).

Positions 9, 57, 85, 91, 102, and 112 each coordinate ATP. Histidine 115 acts as the Pros-phosphohistidine intermediate in catalysis.

Belongs to the NDK family. In terms of assembly, homotetramer. Mg(2+) serves as cofactor.

It localises to the cytoplasm. It carries out the reaction a 2'-deoxyribonucleoside 5'-diphosphate + ATP = a 2'-deoxyribonucleoside 5'-triphosphate + ADP. The catalysed reaction is a ribonucleoside 5'-diphosphate + ATP = a ribonucleoside 5'-triphosphate + ADP. In terms of biological role, major role in the synthesis of nucleoside triphosphates other than ATP. The ATP gamma phosphate is transferred to the NDP beta phosphate via a ping-pong mechanism, using a phosphorylated active-site intermediate. The polypeptide is Nucleoside diphosphate kinase (Campylobacter lari (strain RM2100 / D67 / ATCC BAA-1060)).